The sequence spans 263 residues: Ribonuclease HII (263 aa).

Positions 71 to 262 (KAIAGIDEVG…VKSMCCDSTN (192 aa)) constitute an RNase H type-2 domain. D77, E78, and D172 together coordinate a divalent metal cation.

Belongs to the RNase HII family. Mn(2+) serves as cofactor. Requires Mg(2+) as cofactor.

The protein localises to the cytoplasm. It carries out the reaction Endonucleolytic cleavage to 5'-phosphomonoester.. Its function is as follows. Endonuclease that specifically degrades the RNA of RNA-DNA hybrids. The polypeptide is Ribonuclease HII (Streptococcus pyogenes serotype M1).